Reading from the N-terminus, the 337-residue chain is NADH-quinone oxidoreductase subunit H (337 aa).

Helical transmembrane passes span 9-29 (FAKIWAVLIPLFLAVAYFTYV), 77-97 (FLIAPAMAIMPALAAWAVIPF), 110-130 (LLYILAMTSLGVYGLIIAGWA), 154-174 (MGFALVGVLIAAGTMNLSGIV), 181-201 (FWEWFWLPLLPLFLIYWISGV), 229-249 (MAFAVFFLAEYANMLLISFLA), 274-294 (VPGIVWLFAKAAFFAFCYLWF), and 313-333 (VLIPGTVVWLVVLTGLVYGGV).

This sequence belongs to the complex I subunit 1 family. NDH-1 is composed of 14 different subunits. Subunits NuoA, H, J, K, L, M, N constitute the membrane sector of the complex.

Its subcellular location is the cell inner membrane. It catalyses the reaction a quinone + NADH + 5 H(+)(in) = a quinol + NAD(+) + 4 H(+)(out). In terms of biological role, NDH-1 shuttles electrons from NADH, via FMN and iron-sulfur (Fe-S) centers, to quinones in the respiratory chain. The immediate electron acceptor for the enzyme in this species is believed to be ubiquinone. Couples the redox reaction to proton translocation (for every two electrons transferred, four hydrogen ions are translocated across the cytoplasmic membrane), and thus conserves the redox energy in a proton gradient. This subunit may bind ubiquinone. In Halorhodospira halophila (strain DSM 244 / SL1) (Ectothiorhodospira halophila (strain DSM 244 / SL1)), this protein is NADH-quinone oxidoreductase subunit H.